We begin with the raw amino-acid sequence, 47 residues long: Defensin NsD7 (47 aa).

Intrachain disulfides connect Cys-3–Cys-47, Cys-14–Cys-34, Cys-20–Cys-41, and Cys-24–Cys-43. 4 residues coordinate a 1,2-diacyl-sn-glycero-3-phosphate: Lys-4, His-33, Lys-36, and Arg-39.

This sequence belongs to the DEFL family. In terms of assembly, in the presence of phosphatidic acid (PA), forms right-handed double helices which tend to bundle into fibrils. Each helix is a repetition of dimers containing 2 bound molecules of PA per dimer. Dimers are arranged orthogonally in a tip-to-tip configuration with 1 molecule of PA located at the dimer contact interface. Association of 2 helices to form a double helix depends on intercalating isoleucine residues Ile-15 and Ile-37. Bundling of double helices into fibrils depends on Arg-26.

It localises to the vacuole. Plant defense peptide. Disrupts membranes containing phosphatidic acid (PA) via a PA-dependent oligomerization process. The chain is Defensin NsD7 from Nicotiana suaveolens (Australian tobacco).